The following is a 491-amino-acid chain: Acetyl-coenzyme A carboxylase carboxyl transferase subunit beta, chloroplastic (491 aa).

A disordered region spans residues 28–56 (LGPIENTSESEDPNRNDMKKNSHSWGSRD). Positions 223–491 (LWVQCENCYG…FPLNKNSIEH (269 aa)) constitute a CoA carboxyltransferase N-terminal domain. Residues Cys227, Cys230, Cys246, and Cys249 each coordinate Zn(2+). Residues 227–249 (CENCYGLNYKKILKSKMNLCEQC) form a C4-type zinc finger.

Belongs to the AccD/PCCB family. As to quaternary structure, acetyl-CoA carboxylase is a heterohexamer composed of biotin carboxyl carrier protein, biotin carboxylase and 2 subunits each of ACCase subunit alpha and ACCase plastid-coded subunit beta (accD). Zn(2+) serves as cofactor.

Its subcellular location is the plastid. It is found in the chloroplast stroma. It catalyses the reaction N(6)-carboxybiotinyl-L-lysyl-[protein] + acetyl-CoA = N(6)-biotinyl-L-lysyl-[protein] + malonyl-CoA. It participates in lipid metabolism; malonyl-CoA biosynthesis; malonyl-CoA from acetyl-CoA: step 1/1. Functionally, component of the acetyl coenzyme A carboxylase (ACC) complex. Biotin carboxylase (BC) catalyzes the carboxylation of biotin on its carrier protein (BCCP) and then the CO(2) group is transferred by the transcarboxylase to acetyl-CoA to form malonyl-CoA. In Daucus carota (Wild carrot), this protein is Acetyl-coenzyme A carboxylase carboxyl transferase subunit beta, chloroplastic.